A 310-amino-acid polypeptide reads, in one-letter code: GPN-loop GTPase 2 (310 aa).

An N-acetylalanine modification is found at alanine 2. Residue 19–24 (GSGKTT) participates in GTP binding. The short motif at 76–78 (GPN) is the Gly-Pro-Asn (GPN)-loop; involved in dimer interface element. Residue 178-181 (SKMD) coordinates GTP.

This sequence belongs to the GPN-loop GTPase family. In terms of assembly, heterodimers with GPN1 or GPN3. Binds to RNA polymerase II (RNAPII).

Small GTPase required for proper localization of RNA polymerase II and III (RNAPII and RNAPIII). May act at an RNAP assembly step prior to nuclear import. This Bos taurus (Bovine) protein is GPN-loop GTPase 2 (GPN2).